A 357-amino-acid polypeptide reads, in one-letter code: Large ribosomal subunit protein mL45 (357 aa).

Residues 333–357 (EAKALPLRTTEKLEEAKKEKEQQEI) form a disordered region. The span at 341 to 357 (TTEKLEEAKKEKEQQEI) shows a compositional bias: basic and acidic residues.

It belongs to the mitochondrion-specific ribosomal protein mL45 family.

Its subcellular location is the mitochondrion. This Caenorhabditis elegans protein is Large ribosomal subunit protein mL45 (mrpl-45).